The primary structure comprises 334 residues: 6-phosphogluconolactonase (334 aa).

It belongs to the cycloisomerase 2 family.

It carries out the reaction 6-phospho-D-glucono-1,5-lactone + H2O = 6-phospho-D-gluconate + H(+). Its pathway is carbohydrate degradation; pentose phosphate pathway; D-ribulose 5-phosphate from D-glucose 6-phosphate (oxidative stage): step 2/3. Functionally, catalyzes the hydrolysis of 6-phosphogluconolactone to 6-phosphogluconate. The chain is 6-phosphogluconolactonase from Buchnera aphidicola subsp. Acyrthosiphon pisum (strain Tuc7).